The chain runs to 141 residues: Large ribosomal subunit protein uL16 (141 aa).

The span at 1-17 shows a compositional bias: basic residues; that stretch reads MLQPKRTKYRKVQKGKM. Residues 1-29 are disordered; the sequence is MLQPKRTKYRKVQKGKMKGNSQRGHELSN.

It belongs to the universal ribosomal protein uL16 family. As to quaternary structure, part of the 50S ribosomal subunit.

In terms of biological role, binds 23S rRNA and is also seen to make contacts with the A and possibly P site tRNAs. The polypeptide is Large ribosomal subunit protein uL16 (Flavobacterium psychrophilum (strain ATCC 49511 / DSM 21280 / CIP 103535 / JIP02/86)).